Reading from the N-terminus, the 498-residue chain is ADP,ATP carrier protein 1 (498 aa).

The Cytoplasmic portion of the chain corresponds to 1–33 (MSTTKSDNYISELRKVIWPIERYENKKFLPMAF). The helical transmembrane segment at 34–54 (MMFCILLNYSTLRSIKDGFVV) threads the bilayer. An intrachain disulfide couples Cys37 to Cys85. Residues 55-67 (TDIGAEAISFLKT) lie on the Extracellular side of the membrane. Residues 68 to 88 (YIVLPSAVIAMIVYVKLCDIL) form a helical membrane-spanning segment. Residues 89–92 (KQEN) are Cytoplasmic-facing. A helical transmembrane segment spans residues 93-113 (VFYVITSFFLAYFALFAFVLY). Over 114-147 (PNPDLVHPNPEAIESLSLAYPNFKWFIRIVGKWS) the chain is Extracellular. The chain crosses the membrane as a helical span at residues 148–168 (FASFYTMAELWGTLMLSLLFW). The Cytoplasmic portion of the chain corresponds to 169–184 (QFANQITKTDEAKRFY). A helical membrane pass occupies residues 185–205 (SMFGLLANLALPVTSLIIGYF). Over 206–218 (LHEKTQIVAEHLK) the chain is Extracellular. Residues 219-239 (FTPLFVIMIISSLAVILTYRW) form a helical membrane-spanning segment. Over 240-279 (MNKNVLTDPKLYDPALVKGKKAKAKMSLIESFKMIFTSKY) the chain is Cytoplasmic. Residues 280–300 (VGYIALLLIAYGISVNLVEGV) traverse the membrane as a helical segment. At 301–320 (WKSKLKELHPTKEAYTMYMG) the chain is on the extracellular side. Residues 321-341 (QFQAYQGWVAIAFMIIGSNIL) traverse the membrane as a helical segment. Residues 342-348 (RKVSWLT) are Cytoplasmic-facing. Residues 349–369 (AAMITPLMMLITGIAFFAFIF) traverse the membrane as a helical segment. Over 370–379 (FDSVIAMYLT) the chain is Extracellular. Residues 380-400 (GILASGPLALAVMIGTIQNVL) traverse the membrane as a helical segment. At 401–438 (SKGVKYSLFDATKNMAYIPLDKDLRVKGQAAVEVIGGR) the chain is on the cytoplasmic side. ATP is bound at residue 436-442 (GGRFGKS). A helical transmembrane segment spans residues 439-459 (FGKSGGAIIQSTFFIIFPALG). The Extracellular segment spans residues 460 to 465 (FVEATP). The chain crosses the membrane as a helical span at residues 466-486 (YFASIFFVIVILWIYAVKGLN). The Cytoplasmic segment spans residues 487–498 (KEYQVLVNNTEK).

Belongs to the ADP/ATP translocase tlc family.

The protein resides in the cell membrane. Its function is as follows. Provides the rickettsial cell with host ATP in exchange for rickettsial ADP. This is an obligate exchange system. This energy acquiring activity is an important component of rickettsial parasitism. This is ADP,ATP carrier protein 1 (tlcA) from Rickettsia bellii (strain RML369-C).